The following is a 206-amino-acid chain: Inner membrane-spanning protein YciB (206 aa).

5 helical membrane-spanning segments follow: residues proline 50–leucine 70, glycine 78–histidine 98, tryptophan 105–leucine 125, leucine 150–phenylalanine 170, and alanine 173–isoleucine 193.

Belongs to the YciB family.

The protein resides in the cell inner membrane. In terms of biological role, plays a role in cell envelope biogenesis, maintenance of cell envelope integrity and membrane homeostasis. The protein is Inner membrane-spanning protein YciB of Herminiimonas arsenicoxydans.